Here is a 423-residue protein sequence, read N- to C-terminus: LysM domain-containing GPI-anchored protein 3 (423 aa).

The first 24 residues, 1 to 24 (MKNPEKPLLLFLILASSLASMATA), serve as a signal peptide directing secretion. 4 disulfide bridges follow: Cys-31–Cys-97, Cys-37–Cys-160, Cys-95–Cys-158, and Cys-97–Cys-160. Residues 107 to 154 (THYKTRTSDTLGSIADSVYGGLVSPEQIQVANSETDLSVLDVGTKLVI) enclose the LysM 1 domain. A glycan (N-linked (GlcNAc...) asparagine) is linked at Asn-162. The LysM 2 domain maps to 173–216 (LSYVVRGIDTMAGIAKRFSTSVTDLTNVNAMGAPDINPGDILAV). Cystine bridges form between Cys-221–Cys-253 and Cys-248–Cys-276. N-linked (GlcNAc...) asparagine glycosylation is present at Asn-238. Asn-285 carries N-linked (GlcNAc...) asparagine glycosylation. A lipid anchor (GPI-anchor amidated glycine) is attached at Gly-394. A propeptide spans 395 to 423 (GSISIASCPLSYYSFIALLIPIGSCFFVF) (removed in mature form).

In terms of assembly, interacts with peptidoglycans.

It localises to the cell membrane. In terms of biological role, required as a cell surface receptor for peptidoglycan (PGN) elicitor signaling leading to innate immunity. Plays an essential role in detecting PGNs and restricting bacterial growth (of Pseudomonas syringae pv. tomato DC3000 for example). The polypeptide is LysM domain-containing GPI-anchored protein 3 (LYM3) (Arabidopsis thaliana (Mouse-ear cress)).